A 255-amino-acid polypeptide reads, in one-letter code: tRNA pseudouridine synthase A (255 aa).

The active-site Nucleophile is the aspartate 60. Tyrosine 118 is a binding site for substrate.

This sequence belongs to the tRNA pseudouridine synthase TruA family. Homodimer.

The catalysed reaction is uridine(38/39/40) in tRNA = pseudouridine(38/39/40) in tRNA. In terms of biological role, formation of pseudouridine at positions 38, 39 and 40 in the anticodon stem and loop of transfer RNAs. The polypeptide is tRNA pseudouridine synthase A (Leuconostoc mesenteroides subsp. mesenteroides (strain ATCC 8293 / DSM 20343 / BCRC 11652 / CCM 1803 / JCM 6124 / NCDO 523 / NBRC 100496 / NCIMB 8023 / NCTC 12954 / NRRL B-1118 / 37Y)).